Here is a 346-residue protein sequence, read N- to C-terminus: Protein pelota homolog (346 aa).

Belongs to the eukaryotic release factor 1 family. Pelota subfamily. As to quaternary structure, monomer. The cofactor is a divalent metal cation.

The protein localises to the cytoplasm. In terms of biological role, may function in recognizing stalled ribosomes, interact with stem-loop structures in stalled mRNA molecules, and effect endonucleolytic cleavage of the mRNA. May play a role in the release non-functional ribosomes and degradation of damaged mRNAs. Has endoribonuclease activity. The chain is Protein pelota homolog from Ignicoccus hospitalis (strain KIN4/I / DSM 18386 / JCM 14125).